Here is a 72-residue protein sequence, read N- to C-terminus: Translation initiation factor IF-1 1 (72 aa).

An S1-like domain is found at 1 to 72 (MAKEDRIEMQ…SRARIIFRAK (72 aa)).

This sequence belongs to the IF-1 family. In terms of assembly, component of the 30S ribosomal translation pre-initiation complex which assembles on the 30S ribosome in the order IF-2 and IF-3, IF-1 and N-formylmethionyl-tRNA(fMet); mRNA recruitment can occur at any time during PIC assembly.

Its subcellular location is the cytoplasm. Functionally, one of the essential components for the initiation of protein synthesis. Stabilizes the binding of IF-2 and IF-3 on the 30S subunit to which N-formylmethionyl-tRNA(fMet) subsequently binds. Helps modulate mRNA selection, yielding the 30S pre-initiation complex (PIC). Upon addition of the 50S ribosomal subunit IF-1, IF-2 and IF-3 are released leaving the mature 70S translation initiation complex. This Methylobacillus flagellatus (strain ATCC 51484 / DSM 6875 / VKM B-1610 / KT) protein is Translation initiation factor IF-1 1.